The following is a 400-amino-acid chain: MKEKTIIIVGGGQAAAMAAASLRQQGFTGELHLFSDEQHLPYERPPLSKSMLLEDSPQLQSVLPAHWWQENNVHLHSGVTIKTLGRDTRELVLTNGESWHWDQLFIATGAAARPLPLLDALGERCFTLRHAGDAARLREVLQPERSVVIVGAGTIGLELAASATQRGCKATVIELAATVMGRNAPPPVQRYLLQRHQQAGVRILLNNAIEHVVDGENVELTLQSGETLRADVVIYGIGISANDQLAREANLDTANGIVIDEACRTCDPAIFAGGDVAITRLDNGALHRCESWENANNQAQIAASAMLGLPLPRLPPPWFWSDQYSDNLQFIGDMRGDDWLCRGNPETQKAIWFNLQNGVLIGAVTLNQGREIRLIRKWIQSGKTFDAKLLTDEHIALKSL.

T5 to D36 lines the FAD pocket. NAD(+) is bound at residue S146–E174.

Belongs to the bacterial ring-hydroxylating dioxygenase ferredoxin reductase family. This dioxygenase system consists of four proteins: the two subunits of the hydroxylase component (HcaE and HcaF), a ferredoxin (HcaC) and a ferredoxin reductase (HcaD). The cofactor is FAD.

It carries out the reaction 2 reduced [2Fe-2S]-[ferredoxin] + NAD(+) + H(+) = 2 oxidized [2Fe-2S]-[ferredoxin] + NADH. It participates in aromatic compound metabolism; 3-phenylpropanoate degradation. In terms of biological role, part of the multicomponent 3-phenylpropionate dioxygenase, that converts 3-phenylpropionic acid (PP) and cinnamic acid (CI) into 3-phenylpropionate-dihydrodiol (PP-dihydrodiol) and cinnamic acid-dihydrodiol (CI-dihydrodiol), respectively. This Escherichia coli O7:K1 (strain IAI39 / ExPEC) protein is 3-phenylpropionate/cinnamic acid dioxygenase ferredoxin--NAD(+) reductase component.